Consider the following 566-residue polypeptide: Urease subunit alpha (566 aa).

Residues 129–566 form the Urease domain; that stretch reads GGVDTHIHFI…LPLAQRYFLF (438 aa). Ni(2+) contacts are provided by H134, H136, and K217. K217 carries the post-translational modification N6-carboxylysine. H219 provides a ligand contact to substrate. Residues H246 and H272 each contribute to the Ni(2+) site. Catalysis depends on H320, which acts as the Proton donor. D360 contacts Ni(2+).

This sequence belongs to the metallo-dependent hydrolases superfamily. Urease alpha subunit family. As to quaternary structure, heterotrimer of UreA (gamma), UreB (beta) and UreC (alpha) subunits. Three heterotrimers associate to form the active enzyme. It depends on Ni cation as a cofactor. In terms of processing, carboxylation allows a single lysine to coordinate two nickel ions.

The protein resides in the cytoplasm. The catalysed reaction is urea + 2 H2O + H(+) = hydrogencarbonate + 2 NH4(+). It participates in nitrogen metabolism; urea degradation; CO(2) and NH(3) from urea (urease route): step 1/1. This is Urease subunit alpha from Janthinobacterium sp. (strain Marseille) (Minibacterium massiliensis).